A 484-amino-acid polypeptide reads, in one-letter code: MAAGGDHGSPDSYRSPLASRYASPEMCFVFSDRYKFRTWRQLWLWLAEAEQTLGLPITDEQIQEMKSNLENIDFKMAAEEEKRLRHDVMAHVHTFGHCCPKAAGIIHLGATSCYVGDNTDLIILRNALDLLLPKLARVISRLADFAKERASLPTLGFTHFQPAQLTTVGKRCCLWIQDLCMDLQNLKRVRDDLRFRGVKGTTGTQASFLQLFEGDDHKVEQLDKMVTEKAGFKRAFIITGQTYTRKVDIEVLSVLASLGASVHKICTDIRLLANLKEMEEPFEKQQIGSSAMPYKRNPMRSERCCSLARHLMTLVMDPLQTASVQWFERTLDDSANRRICLAEAFLTADTILNTLQNISEGLVVYPKVIERRIRQELPFMATENIIMAMVKAGGSRQDCHEKIRVLSQQAASVVKQEGGDNDLIERIQVDAYFSPIHSQLDHLLDPSSFTGRASQQVQRFLEEEVYPLLKPYESVMKVKAELCL.

Position 2 is an N-acetylalanine (alanine 2). Substrate-binding positions include 20-21 (RY), 85-87 (RHD), and 111-112 (TS). Position 147 is an N6-acetyllysine (lysine 147). Catalysis depends on histidine 159, which acts as the Proton donor/acceptor. Glutamine 241 lines the substrate pocket. Serine 289 serves as the catalytic Proton donor/acceptor. An N6-acetyllysine modification is found at lysine 295. Residues arginine 303, arginine 329, serine 334, and arginine 338 each contribute to the substrate site. Residue lysine 415 forms a Glycyl lysine isopeptide (Lys-Gly) (interchain with G-Cter in SUMO1) linkage.

It belongs to the lyase 1 family. Adenylosuccinate lyase subfamily. As to quaternary structure, homotetramer. Residues from neighboring subunits contribute catalytic and substrate-binding residues to each active site. In terms of tissue distribution, ubiquitously expressed. Both isoforms are produced by all tissues. Isoform 2 is 10-fold less abundant than isoform 1.

It carries out the reaction N(6)-(1,2-dicarboxyethyl)-AMP = fumarate + AMP. It catalyses the reaction (2S)-2-[5-amino-1-(5-phospho-beta-D-ribosyl)imidazole-4-carboxamido]succinate = 5-amino-1-(5-phospho-beta-D-ribosyl)imidazole-4-carboxamide + fumarate. Its pathway is purine metabolism; AMP biosynthesis via de novo pathway; AMP from IMP: step 2/2. The protein operates within purine metabolism; IMP biosynthesis via de novo pathway; 5-amino-1-(5-phospho-D-ribosyl)imidazole-4-carboxamide from 5-amino-1-(5-phospho-D-ribosyl)imidazole-4-carboxylate: step 2/2. The enzyme reaction kinetics indicate cooperativity between subunits. Functionally, catalyzes two non-sequential steps in de novo AMP synthesis: converts (S)-2-(5-amino-1-(5-phospho-D-ribosyl)imidazole-4-carboxamido)succinate (SAICAR) to fumarate plus 5-amino-1-(5-phospho-D-ribosyl)imidazole-4-carboxamide, and thereby also contributes to de novo IMP synthesis, and converts succinyladenosine monophosphate (SAMP) to AMP and fumarate. The sequence is that of Adenylosuccinate lyase (ADSL) from Homo sapiens (Human).